The sequence spans 735 residues: MATKLFPKFSQGLAQDPTTRRIWYGLAMAHDFESHDGMTEENLYQKIFASHFGQLSIIFLWTSGNLFHVAWQGNFEQWVTDPVHIRPIAHAIWDPHFGQPAVEAFTRGGASGPVNISTSGVYQWWYTIGMRTNQDLYVGSVFLALVSAIFLFAGWLHLQPNFQPSLSWFKDAESRLNHHLSGLFGVSSLAWTGHLVHVAIPESRGQHVGWDNFLSVLPHPQGLTPFFTGNWAAYAQSPDTASHVFGTAQGSGQAILTFLGGFHPQTQSLWLTDMAHHHLAIAVIFIVAGHMYRTNFGIGHRMQAILEAHTPPSGSLGAGHKGLFDTVNNSLHFQLGLALASVGTITSLVAQHMYSLPPYAFQAIDFTTQAALYTHHQYIAGFIMCGAFAHGAIFFIRDYDPEQNKGNVLARMLDHKEALISHLSWVSLFLGFHTLGLYVHNDVMQAFGTPEKQILIEPVFAQWIQAAHGKALYGFDFLLSSKTSAAFANGQSLWLPGWLDAINNNQNSLFLTIGPGDFLVHHAIALGLHTTTLILVKGALDARGSKLMPDKKDFGYSFPCDGPGRGGTCDISAYDAFYLAVFWMLNTIGWVTFYWHWKHLTLWQGNVAQFDESSTYLMGWLRDYLWLNSSQLINGYNPFGMNSLSVWAWTFLFGHLIYATGFMFLISWRGYWQELIETLVWAHEKTPLANLVYWKDKPVALSIVQARLVGLAHFSVGYIFTYAAFLIASTSGRFG.

A run of 8 helical transmembrane segments spans residues 47–70 (IFAS…FHVA), 136–159 (LYVG…LHLQ), 176–200 (LNHH…HVAI), 274–292 (MAHH…GHMY), 331–354 (LHFQ…QHMY), 370–396 (AALY…IFFI), 418–440 (ALIS…LYVH), and 518–536 (FLVH…LILV). Residues Cys-560 and Cys-569 each contribute to the [4Fe-4S] cluster site. The next 2 membrane-spanning stretches (helical) occupy residues 576-597 (AFYL…YWHW) and 644-666 (LSVW…MFLI). His-655, Met-663, and Tyr-671 together coordinate chlorophyll a. Trp-672 serves as a coordination point for phylloquinone. The chain crosses the membrane as a helical span at residues 708 to 728 (LVGLAHFSVGYIFTYAAFLIA).

It belongs to the PsaA/PsaB family. The PsaA/B heterodimer binds the P700 chlorophyll special pair and subsequent electron acceptors. PSI consists of a core antenna complex that captures photons, and an electron transfer chain that converts photonic excitation into a charge separation. The eukaryotic PSI reaction center is composed of at least 11 subunits. The cofactor is P700 is a chlorophyll a/chlorophyll a' dimer, A0 is one or more chlorophyll a, A1 is one or both phylloquinones and FX is a shared 4Fe-4S iron-sulfur center..

Its subcellular location is the plastid. The protein localises to the chloroplast thylakoid membrane. It carries out the reaction reduced [plastocyanin] + hnu + oxidized [2Fe-2S]-[ferredoxin] = oxidized [plastocyanin] + reduced [2Fe-2S]-[ferredoxin]. Its function is as follows. PsaA and PsaB bind P700, the primary electron donor of photosystem I (PSI), as well as the electron acceptors A0, A1 and FX. PSI is a plastocyanin/cytochrome c6-ferredoxin oxidoreductase, converting photonic excitation into a charge separation, which transfers an electron from the donor P700 chlorophyll pair to the spectroscopically characterized acceptors A0, A1, FX, FA and FB in turn. Oxidized P700 is reduced on the lumenal side of the thylakoid membrane by plastocyanin or cytochrome c6. Both potential cofactor branches in PSI seem to be active; however, electron transfer seems to proceed preferentially down the path including the phylloquinone bound by PsaA. The sequence is that of Photosystem I P700 chlorophyll a apoprotein A2 (psaB) from Chlamydomonas reinhardtii (Chlamydomonas smithii).